Reading from the N-terminus, the 352-residue chain is Fatty acid desaturase (352 aa).

The next 2 membrane-spanning stretches (helical) occupy residues 28–48 (SLIQ…LAYL) and 55–75 (LLTL…FIIF). The Histidine box-1 signature appears at 76–80 (HDCCH). Residues 89 to 109 (YNHILGFLTGVLTLFPYLQWQ) form a helical membrane-spanning segment. A Histidine box-2 motif is present at residues 112-116 (HSIHH). 3 helical membrane passes run 151–171 (LYRN…LITN), 186–206 (TYLT…IFGW), and 209–229 (FLLV…WLFY). The Histidine box-3 motif lies at 274–278 (HHVHH).

The protein belongs to the fatty acid desaturase type 1 family.

The protein localises to the cell membrane. It participates in lipid metabolism; fatty acid metabolism. Its function is as follows. Catalyzes the introduction of a cis-double bond at the delta(5) position of existing saturated fatty acids attached to membrane phospholipids. It is not strictly specific for palmitic acid (C16) but can also accept C14 as well as C18 species to yield unsaturated fatty acids. This chain is Fatty acid desaturase (des), found in Bacillus subtilis (strain 168).